Reading from the N-terminus, the 75-residue chain is U6-lycotoxin-Ls1f (75 aa).

An N-terminal signal peptide occupies residues 1–21 (MKLLLFTALVLVVISLVEVEA). Residues 22 to 25 (ENER) constitute a propeptide that is removed on maturation.

The protein belongs to the neurotoxin 19 (CSTX) family. 06 (U6-Lctx) subfamily. In terms of processing, contains 4 disulfide bonds. Expressed by the venom gland.

The protein localises to the secreted. The protein is U6-lycotoxin-Ls1f of Lycosa singoriensis (Wolf spider).